We begin with the raw amino-acid sequence, 175 residues long: Shikimate kinase (175 aa).

14-19 (GAGKST) is a binding site for ATP. Position 18 (S18) interacts with Mg(2+). The substrate site is built by D36, R60, and G82. R120 provides a ligand contact to ATP. R140 contributes to the substrate binding site. Q157 is an ATP binding site.

Belongs to the shikimate kinase family. Monomer. The cofactor is Mg(2+).

Its subcellular location is the cytoplasm. The catalysed reaction is shikimate + ATP = 3-phosphoshikimate + ADP + H(+). Its pathway is metabolic intermediate biosynthesis; chorismate biosynthesis; chorismate from D-erythrose 4-phosphate and phosphoenolpyruvate: step 5/7. In terms of biological role, catalyzes the specific phosphorylation of the 3-hydroxyl group of shikimic acid using ATP as a cosubstrate. The sequence is that of Shikimate kinase from Histophilus somni (strain 2336) (Haemophilus somnus).